The primary structure comprises 349 residues: tRNA pseudouridine synthase D (349 aa).

Phe-27 lines the substrate pocket. Asp-80 acts as the Nucleophile in catalysis. Asn-129 provides a ligand contact to substrate. The 149-residue stretch at Gly-155–Leu-303 folds into the TRUD domain. A substrate-binding site is contributed by Phe-329.

It belongs to the pseudouridine synthase TruD family.

The catalysed reaction is uridine(13) in tRNA = pseudouridine(13) in tRNA. In terms of biological role, responsible for synthesis of pseudouridine from uracil-13 in transfer RNAs. In Klebsiella pneumoniae (strain 342), this protein is tRNA pseudouridine synthase D.